Here is a 439-residue protein sequence, read N- to C-terminus: GTPase Obg (439 aa).

The 159-residue stretch at 1 to 159 folds into the Obg domain; it reads MAFVDQAQIE…RNLKLELKVL (159 aa). The OBG-type G domain maps to 160–336; the sequence is ADVGLVGFPS…LMRLTADMLA (177 aa). GTP-binding positions include 166–173, 191–195, 213–216, 283–286, and 317–319; these read GFPSAGKS, FTTLS, DLPG, TKMD, and SSI. 2 residues coordinate Mg(2+): S173 and T193. Residues 338-357 form a disordered region; that stretch reads APAPESYRPETKNDTSEKSY. Residues 344-354 show a composition bias toward basic and acidic residues; it reads YRPETKNDTSE. An OCT domain is found at 358–439; that stretch reads TFKPETHDFT…NSDFVFEFSE (82 aa).

The protein belongs to the TRAFAC class OBG-HflX-like GTPase superfamily. OBG GTPase family. In terms of assembly, monomer. Requires Mg(2+) as cofactor.

Its subcellular location is the cytoplasm. Its function is as follows. An essential GTPase which binds GTP, GDP and possibly (p)ppGpp with moderate affinity, with high nucleotide exchange rates and a fairly low GTP hydrolysis rate. Plays a role in control of the cell cycle, stress response, ribosome biogenesis and in those bacteria that undergo differentiation, in morphogenesis control. The polypeptide is GTPase Obg (Leuconostoc mesenteroides subsp. mesenteroides (strain ATCC 8293 / DSM 20343 / BCRC 11652 / CCM 1803 / JCM 6124 / NCDO 523 / NBRC 100496 / NCIMB 8023 / NCTC 12954 / NRRL B-1118 / 37Y)).